Reading from the N-terminus, the 204-residue chain is Glycerol-3-phosphate acyltransferase (204 aa).

The next 5 helical transmembrane spans lie at Ile8 to Phe28, Val53 to Ala73, Phe81 to Gly101, Phe116 to Ile136, and Val155 to Leu175.

The protein belongs to the PlsY family. As to quaternary structure, probably interacts with PlsX.

It is found in the cell inner membrane. It catalyses the reaction an acyl phosphate + sn-glycerol 3-phosphate = a 1-acyl-sn-glycero-3-phosphate + phosphate. It participates in lipid metabolism; phospholipid metabolism. Its function is as follows. Catalyzes the transfer of an acyl group from acyl-phosphate (acyl-PO(4)) to glycerol-3-phosphate (G3P) to form lysophosphatidic acid (LPA). This enzyme utilizes acyl-phosphate as fatty acyl donor, but not acyl-CoA or acyl-ACP. This Francisella tularensis subsp. novicida (strain U112) protein is Glycerol-3-phosphate acyltransferase.